The chain runs to 356 residues: 3-isopropylmalate dehydrogenase (356 aa).

Residues arginine 95, arginine 105, arginine 133, and aspartate 223 each coordinate substrate. The Mg(2+) site is built by aspartate 223, aspartate 247, and aspartate 251. 281–293 (GSAPDIAGQNKAN) serves as a coordination point for NAD(+).

It belongs to the isocitrate and isopropylmalate dehydrogenases family. LeuB type 1 subfamily. In terms of assembly, homodimer. Mg(2+) is required as a cofactor. Requires Mn(2+) as cofactor.

Its subcellular location is the cytoplasm. The catalysed reaction is (2R,3S)-3-isopropylmalate + NAD(+) = 4-methyl-2-oxopentanoate + CO2 + NADH. It participates in amino-acid biosynthesis; L-leucine biosynthesis; L-leucine from 3-methyl-2-oxobutanoate: step 3/4. Catalyzes the oxidation of 3-carboxy-2-hydroxy-4-methylpentanoate (3-isopropylmalate) to 3-carboxy-4-methyl-2-oxopentanoate. The product decarboxylates to 4-methyl-2 oxopentanoate. The polypeptide is 3-isopropylmalate dehydrogenase (Neisseria meningitidis serogroup A / serotype 4A (strain DSM 15465 / Z2491)).